The primary structure comprises 725 residues: MEALAKEIGIPEGEYREIVQRLGREPNRVELLLFKVMWSEHCAYKNSRPLLKALPKEGEAVLQGPGENAGVVRVGEGWAVAFKIESHNHPSAVEPFQGAATGVGGILRDIMSMGARPIALLDSLRFGPPEEARSRYLLKGVVSGIAFYGNAIGVPTVGGDLYFHEGYRENPLVNAMCLGLLREEHLKRSRASLGRPIYYAGAKTGRDGIGGAAFASRELKEEKAEDRPAVQVGDPFLGKLLMEATLEAIELDLVEGVQDMGAAGLTSSLSELAHKSGLGVELHLDLVPTREEGMTPEELLLSESQERMVLVPKEGKEKALEEVFGRWGLDCVPVARTIPERVFRVLFRGEVVAEVPTEALAEAPTYVRVGREDPEVRRLRETPIPPLEADPQEVLRRLLASPNLASREAVYERYDHQVGTRTALLPGKGDAAVLWIKGTRLGVAAKVDQNPRYSRLHPRLGAMHALAEACRNVSVVGAKPLAYTDGLNLGSPETPEGYHELAETIAGLKEASEALGVPVVSGNVSLYNESGGKRIPPTAMVGVVGVLEVDKRAEMGFRRPGEVLLLIGEERGELGASEVLYLLTGKEFGHPPRLDLGREKAVQEAIRDLIQRGLTRTAHDVAEGGLLLALAEMTFPYGVGATVEVREEGLEALFGEAPSRVLFTVEKTRLQEATLLLEERGLPYRVLGETGGKSLTVLTPGGVLEWSLEELLSAWKAPLREVLDG.

Histidine 41 is a catalytic residue. ATP-binding residues include tyrosine 44 and lysine 83. Mg(2+) is bound at residue glutamate 85. Substrate-binding positions include 86 to 89 (SHNH) and arginine 108. The active-site Proton acceptor is histidine 87. Aspartate 109 provides a ligand contact to Mg(2+). Position 231 (glutamine 231) interacts with substrate. Aspartate 259 is a Mg(2+) binding site. Position 303-305 (303-305 (ESQ)) interacts with substrate. 2 residues coordinate ATP: aspartate 485 and glycine 522. Residue asparagine 523 coordinates Mg(2+). Serine 525 is a substrate binding site.

The protein belongs to the FGAMS family. Monomer. Part of the FGAM synthase complex composed of 1 PurL, 1 PurQ and 2 PurS subunits.

It is found in the cytoplasm. The enzyme catalyses N(2)-formyl-N(1)-(5-phospho-beta-D-ribosyl)glycinamide + L-glutamine + ATP + H2O = 2-formamido-N(1)-(5-O-phospho-beta-D-ribosyl)acetamidine + L-glutamate + ADP + phosphate + H(+). The protein operates within purine metabolism; IMP biosynthesis via de novo pathway; 5-amino-1-(5-phospho-D-ribosyl)imidazole from N(2)-formyl-N(1)-(5-phospho-D-ribosyl)glycinamide: step 1/2. Part of the phosphoribosylformylglycinamidine synthase complex involved in the purines biosynthetic pathway. Catalyzes the ATP-dependent conversion of formylglycinamide ribonucleotide (FGAR) and glutamine to yield formylglycinamidine ribonucleotide (FGAM) and glutamate. The FGAM synthase complex is composed of three subunits. PurQ produces an ammonia molecule by converting glutamine to glutamate. PurL transfers the ammonia molecule to FGAR to form FGAM in an ATP-dependent manner. PurS interacts with PurQ and PurL and is thought to assist in the transfer of the ammonia molecule from PurQ to PurL. In Thermus thermophilus (strain ATCC BAA-163 / DSM 7039 / HB27), this protein is Phosphoribosylformylglycinamidine synthase subunit PurL.